A 475-amino-acid polypeptide reads, in one-letter code: Dynein regulatory complex subunit 4 (475 aa).

Positions 1-22 (MPPKRKSSPKGKTPTVVDGLST) are disordered. Residues 1–113 (MPPKRKSSPK…LLYEQQNMLS (113 aa)) form a regulates microtubule-binding region. Coiled coils occupy residues 20–104 (LSTE…VKHL), 142–200 (RSLK…QEEE), and 242–426 (KNLD…VARV). The tract at residues 114-257 (ELKAESIIST…TSLKEELKEM (144 aa)) is microtubule-binding.

It belongs to the DRC4 family. Component of the nexin-dynein regulatory complex (N-DRC). Interacts with microtubules.

It localises to the cytoplasm. It is found in the cytoskeleton. Its subcellular location is the cell projection. The protein localises to the cilium. The protein resides in the flagellum. It localises to the cilium axoneme. It is found in the cilium basal body. Its subcellular location is the golgi apparatus. The protein localises to the flagellum axoneme. Functionally, component of the nexin-dynein regulatory complex (N-DRC), a key regulator of ciliary/flagellar motility which maintains the alignment and integrity of the distal axoneme and regulates microtubule sliding in motile axonemes. Plays an important role in the assembly of the N-DRC linker. Plays dual roles at both the primary (or non-motile) cilia to regulate hedgehog signaling and in motile cilia to coordinate cilia movement. Required for proper slow muscle development and positively regulates ciliary smoothened (SMO)-dependent Hedgehog (Hh) signaling pathway. Required for tether cilia motility which is essential for normal otolith formation and localization in the developing inner ear. This Danio rerio (Zebrafish) protein is Dynein regulatory complex subunit 4 (gas8).